A 661-amino-acid polypeptide reads, in one-letter code: PAN2-PAN3 deadenylation complex subunit PAN3 (661 aa).

Disordered stretches follow at residues 1 to 26 and 53 to 130; these read MASAGKPALDDSRRGTGSPKIKAREN and DPHK…LRQD. The C3H1-type zinc finger occupies 26–55; sequence NAKDTLCRNITIYGRCRYEDKGCAFNHDPH. Positions 75–102 are enriched in low complexity; that stretch reads SFTPSLLSSNGSSPTSTPATTKKMTTIS. Polar residues predominate over residues 115 to 130; that stretch reads SVVSRSNASTPGLRQD. The pseudokinase domain stretch occupies residues 263–524; sequence QTLPNTQLPA…NIDIFITGIS (262 aa). Residues arginine 315, 364 to 371, and 424 to 425 contribute to the ATP site; these read DYHPLSKT and SK. Residues 525-563 adopt a coiled-coil conformation; that stretch reads SQLMSTFDSALHLDDQLTSDLSRELENGRLVRLMTKLNF. Positions 564 to 661 are knob domain; sequence VNERPEYEHD…ALMKPARRMH (98 aa).

This sequence belongs to the protein kinase superfamily. PAN3 family. Homodimer. Forms a heterotrimer with a catalytic subunit pan2 to form the poly(A)-nuclease (PAN) deadenylation complex. Interacts (via PAM-2 motif) with poly(A)-binding protein pab1 (via PABC domain), conferring substrate specificity of the enzyme complex.

The protein resides in the cytoplasm. Functionally, regulatory subunit of the poly(A)-nuclease (PAN) deadenylation complex, one of two cytoplasmic mRNA deadenylases involved in mRNA turnover. PAN specifically shortens poly(A) tails of RNA and the activity is stimulated by poly(A)-binding protein pab1. PAN deadenylation is followed by rapid degradation of the shortened mRNA tails by the CCR4-NOT complex. Deadenylated mRNAs are then degraded by two alternative mechanisms, namely exosome-mediated 3'-5' exonucleolytic degradation, or deadenylation-dependent mRNA decaping and subsequent 5'-3' exonucleolytic degradation by xrn1. May also be involved in post-transcriptional maturation of mRNA poly(A) tails. pan3 acts as a positive regulator for PAN activity, recruiting the catalytic subunit pan2 to mRNA via its interaction with RNA and with pab1. This is PAN2-PAN3 deadenylation complex subunit PAN3 from Neosartorya fischeri (strain ATCC 1020 / DSM 3700 / CBS 544.65 / FGSC A1164 / JCM 1740 / NRRL 181 / WB 181) (Aspergillus fischerianus).